We begin with the raw amino-acid sequence, 396 residues long: Elongation factor Tu (396 aa).

The tr-type G domain maps to 10–206 (KPHVNVGTIG…AVDAYIPTPQ (197 aa)). The G1 stretch occupies residues 19 to 26 (GHVDHGKT). Residue 19–26 (GHVDHGKT) coordinates GTP. T26 contacts Mg(2+). Positions 60 to 64 (GITIA) are G2. Residues 81–84 (DCPG) are G3. GTP-binding positions include 81 to 85 (DCPGH) and 136 to 139 (NKVD). The G4 stretch occupies residues 136–139 (NKVD). A G5 region spans residues 174-176 (SAL).

Belongs to the TRAFAC class translation factor GTPase superfamily. Classic translation factor GTPase family. EF-Tu/EF-1A subfamily. Monomer.

The protein resides in the cytoplasm. The catalysed reaction is GTP + H2O = GDP + phosphate + H(+). GTP hydrolase that promotes the GTP-dependent binding of aminoacyl-tRNA to the A-site of ribosomes during protein biosynthesis. The polypeptide is Elongation factor Tu (Anaeromyxobacter dehalogenans (strain 2CP-C)).